The primary structure comprises 377 residues: UPF0754 membrane protein RBAM_010020 (377 aa).

2 helical membrane-spanning segments follow: residues 1-21 (MGIA…GAVT) and 357-377 (YLGG…VILF).

The protein belongs to the UPF0754 family.

The protein localises to the cell membrane. This chain is UPF0754 membrane protein RBAM_010020, found in Bacillus velezensis (strain DSM 23117 / BGSC 10A6 / LMG 26770 / FZB42) (Bacillus amyloliquefaciens subsp. plantarum).